Reading from the N-terminus, the 142-residue chain is Hemoglobin subunit alpha (142 aa).

The region spanning 2–142 (VLSATDKSNV…VSTVLTSKYR (141 aa)) is the Globin domain. Ser4 is modified (phosphoserine). 2 positions are modified to N6-succinyllysine: Lys8 and Lys12. Position 17 is an N6-acetyllysine; alternate (Lys17). Lys17 bears the N6-succinyllysine; alternate mark. Tyr25 is subject to Phosphotyrosine. Ser36 carries the phosphoserine modification. An N6-succinyllysine modification is found at Lys41. Ser50 carries the phosphoserine modification. His59 provides a ligand contact to O2. His88 is a heme b binding site. At Ser103 the chain carries Phosphoserine. Thr109 bears the Phosphothreonine mark. The residue at position 125 (Ser125) is a Phosphoserine. Phosphothreonine occurs at positions 135 and 138. Ser139 is modified (phosphoserine).

Belongs to the globin family. In terms of assembly, heterotetramer of two alpha chains and two beta chains. As to expression, red blood cells.

In terms of biological role, involved in oxygen transport from the lung to the various peripheral tissues. Functionally, hemopressin acts as an antagonist peptide of the cannabinoid receptor CNR1. Hemopressin-binding efficiently blocks cannabinoid receptor CNR1 and subsequent signaling. The chain is Hemoglobin subunit alpha (HBA) from Alces alces alces (European moose).